The primary structure comprises 478 residues: Alpha-(1,3)-fucosyltransferase FucT (478 aa).

Substrate is bound by residues glycine 94, 186 to 189, arginine 195, 222 to 225, asparagine 240, and 246 to 250; these read VASN, VKNK, and YVTEK. Positions 347-353 are important for acceptor specificity; that stretch reads DNPFIFC. Tandem repeats lie at residues 364 to 370, 371 to 377, 378 to 384, 385 to 391, 392 to 398, 399 to 405, 406 to 412, 413 to 419, 420 to 426, and 427 to 433. The 10 X 7 AA tandem repeat of D-D-L-R-[IV]-N-Y stretch occupies residues 364–433; it reads DDLRVNYDDL…VNYDDLRVNY (70 aa). Positions 434–478 are may be involved in membrane binding; it reads ERLLSKATPLLELSQNTTSKIYRKAYQKSLPLLRAIRRWVKKLGL.

This sequence belongs to the glycosyltransferase 10 family. In terms of assembly, homodimer.

It localises to the membrane. The protein localises to the cytoplasm. It carries out the reaction a beta-D-galactosyl-(1-&gt;4)-N-acetyl-beta-D-glucosaminyl derivative + GDP-beta-L-fucose = a beta-D-galactosyl-(1-&gt;4)-[alpha-L-fucosyl-(1-&gt;3)]-N-acetyl-beta-D-glucosaminyl derivative + GDP + H(+). The protein operates within lipopolysaccharide biosynthesis; LPS oligosaccharide biosynthesis. Its function is as follows. Involved in the biosynthesis of the Lewis X (LeX) trisaccharide of the lipopolysaccharide (LPS) O-antigen. Catalyzes the addition of fucose in alpha 1-3 linkage to Gal-beta-1-4-GlcNAc-beta-O-R (LacNAc-R) type II acceptor. This chain is Alpha-(1,3)-fucosyltransferase FucT, found in Helicobacter pylori (Campylobacter pylori).